The chain runs to 151 residues: Methylated-DNA--protein-cysteine methyltransferase (151 aa).

Residue cysteine 119 is the Nucleophile; methyl group acceptor of the active site.

This sequence belongs to the MGMT family.

The protein resides in the cytoplasm. The catalysed reaction is a 6-O-methyl-2'-deoxyguanosine in DNA + L-cysteinyl-[protein] = S-methyl-L-cysteinyl-[protein] + a 2'-deoxyguanosine in DNA. It catalyses the reaction a 4-O-methyl-thymidine in DNA + L-cysteinyl-[protein] = a thymidine in DNA + S-methyl-L-cysteinyl-[protein]. Involved in the cellular defense against the biological effects of O6-methylguanine (O6-MeG) and O4-methylthymine (O4-MeT) in DNA. Repairs the methylated nucleobase in DNA by stoichiometrically transferring the methyl group to a cysteine residue in the enzyme. This is a suicide reaction: the enzyme is irreversibly inactivated. The sequence is that of Methylated-DNA--protein-cysteine methyltransferase from Saccharolobus islandicus (strain M.16.27) (Sulfolobus islandicus).